The following is a 378-amino-acid chain: Ribosomal RNA large subunit methyltransferase G (378 aa).

The protein belongs to the methyltransferase superfamily. RlmG family.

It localises to the cytoplasm. It catalyses the reaction guanosine(1835) in 23S rRNA + S-adenosyl-L-methionine = N(2)-methylguanosine(1835) in 23S rRNA + S-adenosyl-L-homocysteine + H(+). Its function is as follows. Specifically methylates the guanine in position 1835 (m2G1835) of 23S rRNA. This Salmonella paratyphi B (strain ATCC BAA-1250 / SPB7) protein is Ribosomal RNA large subunit methyltransferase G.